The chain runs to 1156 residues: ATP-dependent RNA helicase glh-4 (1156 aa).

Disordered stretches follow at residues 1–81 (MSFS…GAPS), 194–213 (TGVG…GQQP), 231–423 (SSSG…DSST), and 436–522 (HRAS…SGLG). A compositionally biased stretch (basic and acidic residues) spans 12-22 (AEVKVAEDVPE). Positions 24-34 (NVPPPVEPPRA) are enriched in pro residues. Composition is skewed to polar residues over residues 60–73 (ITTS…TTPK), 194–211 (TGVG…SFGQ), and 243–258 (TESS…TSQP). Gly residues predominate over residues 259–281 (GFGGDSSTGFGSGLKAGFGGHGA). Positions 307–319 (ASSSNESAFGQQS) are enriched in polar residues. 2 stretches are compositionally biased toward gly residues: residues 321-332 (GFGGATKNGFGG) and 342-358 (SKAG…GGQK). Composition is skewed to polar residues over residues 362–371 (TESSGFPTKE) and 395–406 (PSTTDSSSGQQT). A compositionally biased stretch (gly residues) spans 408–423 (GFGGASKPGFGGDSST). 2 stretches are compositionally biased toward polar residues: residues 440 to 451 (TAENSGLPTETT) and 464 to 476 (ASSS…GQQS). The segment covering 478–489 (GFGGATKNGFGG) has biased composition (gly residues). CCHC-type zinc fingers lie at residues 570–587 (RGCH…ECDK), 593–610 (FPCR…DCDQ), 616–633 (GPCR…DCDQ), 639–656 (GPCR…DCQN), and 665–682 (EPCR…ECPT). Residues 736–764 (SFDGFKILPQDLHDNLKRMKMNRPTPIQR) carry the Q motif motif. The Helicase ATP-binding domain maps to 767-951 (FFPIMHGNDV…LPKFVKEGYT (185 aa)). 780 to 787 (AHTGSGKT) contributes to the ATP binding site. Residues 897-900 (DEAD) carry the DEAD box motif. One can recognise a Helicase C-terminal domain in the interval 986–1139 (GIDENTVTLL…EVPEWLTEGA (154 aa)). Residues 1135-1156 (LTEGAGHQEEGGDDWNEQEQEW) form a disordered region. Over residues 1145 to 1156 (GGDDWNEQEQEW) the composition is skewed to acidic residues.

It belongs to the DEAD box helicase family. DDX4/VASA subfamily. In terms of assembly, interacts (via C-terminus) with kgb-1.

It carries out the reaction ATP + H2O = ADP + phosphate + H(+). In terms of biological role, probable ATP-binding RNA helicase. May act redundantly with the P-granule component glh-1 to regulate the formation of the granular structure of P-granules in embryos. May protect somatic cells from excessive apoptosis during normal development. This chain is ATP-dependent RNA helicase glh-4, found in Caenorhabditis elegans.